A 299-amino-acid polypeptide reads, in one-letter code: Large ribosomal subunit protein eL22 (299 aa).

2 disordered regions span residues 1 to 142 (MAPT…AAPA) and 155 to 178 (VAKP…KKNV). Composition is skewed to basic and acidic residues over residues 33–42 (GKVEKPKAEA) and 55–64 (KASEAAKDVK). Composition is skewed to low complexity over residues 65-98 (AAAA…AAAA) and 105-142 (AAAA…AAPA).

The protein belongs to the eukaryotic ribosomal protein eL22 family.

This Drosophila melanogaster (Fruit fly) protein is Large ribosomal subunit protein eL22 (RpL22).